Reading from the N-terminus, the 160-residue chain is Cytochrome b6-f complex subunit 4 (160 aa).

3 consecutive transmembrane segments (helical) span residues 36-56, 95-115, and 131-151; these read LLYVFPIVIMGSFAAIVALAV, LLGVLAMASVPLGLILVPFIE, and TVFLFGTLVTLWLGIGAALPL.

It belongs to the cytochrome b family. PetD subfamily. In terms of assembly, the 4 large subunits of the cytochrome b6-f complex are cytochrome b6, subunit IV (17 kDa polypeptide, PetD), cytochrome f and the Rieske protein, while the 4 small subunits are PetG, PetL, PetM and PetN. The complex functions as a dimer.

Its subcellular location is the cellular thylakoid membrane. Component of the cytochrome b6-f complex, which mediates electron transfer between photosystem II (PSII) and photosystem I (PSI), cyclic electron flow around PSI, and state transitions. This Desmonostoc sp. (strain PCC 7906) (Nostoc sp. (strain PCC 7906)) protein is Cytochrome b6-f complex subunit 4.